Consider the following 254-residue polypeptide: Pimeloyl-[acyl-carrier protein] methyl ester esterase (254 aa).

Positions 16–242 constitute an AB hydrolase-1 domain; sequence LVLIHGWGMN…ASHAPFISHP (227 aa). Substrate-binding positions include W22, 82–83, and 143–147; these read SL and FLALQ. S82 (nucleophile) is an active-site residue. Residues D207 and H235 contribute to the active site. H235 contributes to the substrate binding site.

This sequence belongs to the AB hydrolase superfamily. Carboxylesterase BioH family. As to quaternary structure, monomer.

The protein localises to the cytoplasm. The catalysed reaction is 6-carboxyhexanoyl-[ACP] methyl ester + H2O = 6-carboxyhexanoyl-[ACP] + methanol + H(+). It participates in cofactor biosynthesis; biotin biosynthesis. Functionally, the physiological role of BioH is to remove the methyl group introduced by BioC when the pimeloyl moiety is complete. It allows to synthesize pimeloyl-ACP via the fatty acid synthetic pathway through the hydrolysis of the ester bonds of pimeloyl-ACP esters. The chain is Pimeloyl-[acyl-carrier protein] methyl ester esterase from Photobacterium profundum (strain SS9).